Here is a 654-residue protein sequence, read N- to C-terminus: Carboxypeptidase Z (654 aa).

The N-terminal stretch at 1–20 is a signal peptide; the sequence is MPTMPLLLAALAALAVLALA. In terms of domain architecture, FZ spans 43-165; it reads THSATCVDLH…APEEEGCYDP (123 aa). Disulfide bonds link cysteine 48/cysteine 114, cysteine 56/cysteine 107, cysteine 98/cysteine 134, cysteine 123/cysteine 162, and cysteine 127/cysteine 151. Asparagine 62 carries N-linked (GlcNAc...) asparagine glycosylation. Residues 191-507 enclose the Peptidase M14 domain; that stretch reads AHHSYAQMVR…EPLLNFLEMV (317 aa). Residues histidine 253 and glutamate 256 each contribute to the Zn(2+) site. N-linked (GlcNAc...) asparagine glycosylation is present at asparagine 286. Histidine 385 contributes to the Zn(2+) binding site. Glutamate 477 functions as the Proton donor/acceptor in the catalytic mechanism. The disordered stretch occupies residues 596–630; that stretch reads FLPGPSRALPRFQDPQREPTQMDFEPPRARRQPAS.

It belongs to the peptidase M14 family. Zn(2+) serves as cofactor.

Its subcellular location is the secreted. It localises to the extracellular space. It is found in the extracellular matrix. Inhibited by 2-mercaptomethyl-3-guanidinoethylthiopropanoic acid (MGTA) and guanidinoethylmercaptosuccinic acid (GEMSA). Inhibited by chelating agents such as EDTA and EGTA. Cleaves substrates with C-terminal arginine residues. Probably modulates the Wnt signaling pathway, by cleaving some undefined protein. May play a role in cleavage during prohormone processing. This Mus musculus (Mouse) protein is Carboxypeptidase Z (Cpz).